Reading from the N-terminus, the 424-residue chain is MDKLVIQGGTRLEGTIAASGSKNSSLPIIAATLLAGTGLFRLHRIPDLKDIATFRSLLHHLGAESHFEDGILEISTSKVKSARAPYELVKKMRASIYVLGPLLARFGHAEVSLPGGCAFGPRPIDLHLMAMEKLGATITIKTGFIEATTNKGRLQGGQIDFPVSSVGATGNALMAAALAEGTTTITNAAAEPEIEALCHFLAAMGSPITGIGTTTLTIEGRPTLQPIEFNNVFDRIEAGTLLAAAAITGGSITLTDTDPEQMQSVLEAFTRSGCTVTTNGHSISLKSPGALQPVNITAEPYPAFPTDMQAQWMALMTQAEGTSLITDRIYHERFNHIPELNRLGAHIDITDNQAVVHGPQRLSGTKVMSTDLRASASLVLAGLVAEGTTEVLRVYHLDRGYERIEEKLRRLGARIERQKYDEFS.

22–23 (KN) contributes to the phosphoenolpyruvate binding site. Residue arginine 93 coordinates UDP-N-acetyl-alpha-D-glucosamine. Cysteine 117 acts as the Proton donor in catalysis. The residue at position 117 (cysteine 117) is a 2-(S-cysteinyl)pyruvic acid O-phosphothioketal. Residues 122-126 (RPIDL), aspartate 307, and isoleucine 329 contribute to the UDP-N-acetyl-alpha-D-glucosamine site.

It belongs to the EPSP synthase family. MurA subfamily.

The protein resides in the cytoplasm. It catalyses the reaction phosphoenolpyruvate + UDP-N-acetyl-alpha-D-glucosamine = UDP-N-acetyl-3-O-(1-carboxyvinyl)-alpha-D-glucosamine + phosphate. Its pathway is cell wall biogenesis; peptidoglycan biosynthesis. In terms of biological role, cell wall formation. Adds enolpyruvyl to UDP-N-acetylglucosamine. The sequence is that of UDP-N-acetylglucosamine 1-carboxyvinyltransferase from Chlorobium phaeovibrioides (strain DSM 265 / 1930) (Prosthecochloris vibrioformis (strain DSM 265)).